The chain runs to 290 residues: Expansin-A26 (290 aa).

The N-terminal stretch at M1–A29 is a signal peptide. Residues D45–A67 form a disordered region. An Expansin-like EG45 domain is found at G101 to G196. The Expansin-like CBD domain occupies S206–A286. N250 is a glycosylation site (N-linked (GlcNAc...) asparagine).

Belongs to the expansin family. Expansin A subfamily. Expressed in flowers.

Its subcellular location is the secreted. It localises to the cell wall. The protein localises to the membrane. Functionally, may cause loosening and extension of plant cell walls by disrupting non-covalent bonding between cellulose microfibrils and matrix glucans. No enzymatic activity has been found. May be required for rapid internodal elongation in deepwater rice during submergence. This is Expansin-A26 (EXPA26) from Oryza sativa subsp. japonica (Rice).